The primary structure comprises 394 residues: GDP-mannose transporter (394 aa).

At 1–56 (MSNKKNEDIEMRAVEGANDFGGEKDPFLGRNSPVLRPRGREPTASAYFGKLDNSPG) the chain is on the cytoplasmic side. Residues 57–77 (ASIIAYCLSSISMTVVNKYVV) traverse the membrane as a helical segment. Over 78–81 (SGES) the chain is Lumenal. Residues 82–102 (WNLNFFYLGVQSLVCTIAILL) form a helical membrane-spanning segment. Residues 103 to 122 (SRQTGLIKNLAPFDSNKAKR) lie on the Cytoplasmic side of the membrane. A helical membrane pass occupies residues 123-145 (WFPVSLLLVSMIYTGANALQYLS). The Lumenal segment spans residues 146–150 (VPVYT). A helical membrane pass occupies residues 151–168 (IFKNLTIIVIAYGEVLWF). The Cytoplasmic portion of the chain corresponds to 169–174 (GGSVTP). The helical transmembrane segment at 175–199 (LMLLSFGLMVLSSVVAAWADIQAAI) threads the bilayer. Over 200-207 (DGVGHSAE) the chain is Lumenal. Residues 208-228 (TSAALATLNAGYAWMGLNVVC) form a helical membrane-spanning segment. The Cytoplasmic portion of the chain corresponds to 229–249 (TSSYLLGMRKVIKKMNFKDYD). Residues 250–270 (SMFYNNLLTIPVLVVCSLLVE) form a helical membrane-spanning segment. Residues 271–288 (DWSSENLAKNFPIETRNK) are Lumenal-facing. Residues 289–309 (LMVGMIYSGLAAIFISYCSAW) form a helical membrane-spanning segment. The Cytoplasmic segment spans residues 310 to 317 (CIRVTSST). The chain crosses the membrane as a helical span at residues 318-338 (TYSMVGALNKLPIAISGLIFF). Over 339–341 (DAP) the chain is Lumenal. A helical transmembrane segment spans residues 342–362 (ITFGSITAIAVGFVSGLVFAW). The Cytoplasmic segment spans residues 363-394 (AKVRQKAQEAGLLPTTKPTMSASAQSNRDANS).

This sequence belongs to the TPT transporter family. SLC35D subfamily. Homooligomer.

It is found in the golgi apparatus membrane. The protein resides in the cytoplasmic vesicle membrane. It localises to the endoplasmic reticulum membrane. Involved in the import of GDP-mannose from the cytoplasm into the Golgi lumen. The protein is GDP-mannose transporter (VRG4) of Chaetomium globosum (strain ATCC 6205 / CBS 148.51 / DSM 1962 / NBRC 6347 / NRRL 1970) (Soil fungus).